A 248-amino-acid chain; its full sequence is tRNA uridine(34) hydroxylase (248 aa).

Residues 124–218 (TKQDVIVVDT…YLEDTQNKNN (95 aa)) enclose the Rhodanese domain. The Cysteine persulfide intermediate role is filled by Cys178.

It belongs to the TrhO family.

It catalyses the reaction uridine(34) in tRNA + AH2 + O2 = 5-hydroxyuridine(34) in tRNA + A + H2O. Catalyzes oxygen-dependent 5-hydroxyuridine (ho5U) modification at position 34 in tRNAs. In Rickettsia bellii (strain OSU 85-389), this protein is tRNA uridine(34) hydroxylase.